Here is a 459-residue protein sequence, read N- to C-terminus: Ribulose bisphosphate carboxylase large chain (459 aa).

Lys4 is modified (N6,N6,N6-trimethyllysine). Substrate-binding residues include Asn113 and Thr163. The Proton acceptor role is filled by Lys165. Lys167 is a binding site for substrate. 3 residues coordinate Mg(2+): Lys191, Asp193, and Glu194. Lys191 is subject to N6-carboxylysine. His284 serves as the catalytic Proton acceptor. Arg285, His317, and Ser369 together coordinate substrate.

The protein belongs to the RuBisCO large chain family. Type I subfamily. In terms of assembly, heterohexadecamer of 8 large chains and 8 small chains; disulfide-linked. The disulfide link is formed within the large subunit homodimers. Mg(2+) is required as a cofactor. Post-translationally, the disulfide bond which can form in the large chain dimeric partners within the hexadecamer appears to be associated with oxidative stress and protein turnover.

It is found in the plastid. Its subcellular location is the chloroplast. It carries out the reaction 2 (2R)-3-phosphoglycerate + 2 H(+) = D-ribulose 1,5-bisphosphate + CO2 + H2O. It catalyses the reaction D-ribulose 1,5-bisphosphate + O2 = 2-phosphoglycolate + (2R)-3-phosphoglycerate + 2 H(+). Its function is as follows. RuBisCO catalyzes two reactions: the carboxylation of D-ribulose 1,5-bisphosphate, the primary event in carbon dioxide fixation, as well as the oxidative fragmentation of the pentose substrate in the photorespiration process. Both reactions occur simultaneously and in competition at the same active site. In Nypa fruticans (Nypa palm), this protein is Ribulose bisphosphate carboxylase large chain.